Consider the following 52-residue polypeptide: Large ribosomal subunit protein eL40 (52 aa).

It belongs to the eukaryotic ribosomal protein eL40 family.

This is Large ribosomal subunit protein eL40 from Thermococcus onnurineus (strain NA1).